Reading from the N-terminus, the 48-residue chain is Large ribosomal subunit protein bL36c (48 aa).

It belongs to the bacterial ribosomal protein bL36 family.

The protein resides in the plastid. It is found in the chloroplast. The polypeptide is Large ribosomal subunit protein bL36c (rpl36) (Guillardia theta (Cryptophyte)).